We begin with the raw amino-acid sequence, 131 residues long: ER membrane protein complex subunit 5 (131 aa).

The Cytoplasmic segment spans residues 1–3 (MAP). The helical transmembrane segment at 4 to 22 (SLWKGLVGIGLFALAHAAF) threads the bilayer. At 23 to 43 (SAAQHRSYMRLTEKEDESLPI) the chain is on the lumenal side. The helical transmembrane segment at 44–63 (DIVLQTLLAFAVTCYGIVHI) threads the bilayer. The Cytoplasmic segment spans residues 64–131 (AGEFKDMDAT…KLRKLESLRR (68 aa)). Serine 120 is modified (phosphoserine).

This sequence belongs to the membrane magnesium transporter (TC 1.A.67) family. In terms of assembly, component of the ER membrane protein complex (EMC).

The protein resides in the endoplasmic reticulum membrane. It is found in the golgi apparatus membrane. The protein localises to the early endosome membrane. Its function is as follows. Part of the endoplasmic reticulum membrane protein complex (EMC) that enables the energy-independent insertion into endoplasmic reticulum membranes of newly synthesized membrane proteins. Preferentially accommodates proteins with transmembrane domains that are weakly hydrophobic or contain destabilizing features such as charged and aromatic residues. Involved in the cotranslational insertion of multi-pass membrane proteins in which stop-transfer membrane-anchor sequences become ER membrane spanning helices. It is also required for the post-translational insertion of tail-anchored/TA proteins in endoplasmic reticulum membranes. By mediating the proper cotranslational insertion of N-terminal transmembrane domains in an N-exo topology, with translocated N-terminus in the lumen of the ER, controls the topology of multi-pass membrane proteins like the G protein-coupled receptors. By regulating the insertion of various proteins in membranes, it is indirectly involved in many cellular processes. May be involved in Mg(2+) transport. The sequence is that of ER membrane protein complex subunit 5 from Homo sapiens (Human).